A 275-amino-acid polypeptide reads, in one-letter code: Putative carbamate hydrolase RutD (275 aa).

Belongs to the AB hydrolase superfamily. Hydrolase RutD family.

It catalyses the reaction carbamate + 2 H(+) = NH4(+) + CO2. Involved in pyrimidine catabolism. May facilitate the hydrolysis of carbamate, a reaction that can also occur spontaneously. The polypeptide is Putative carbamate hydrolase RutD (Escherichia coli (strain UTI89 / UPEC)).